The primary structure comprises 307 residues: Ribosomal RNA small subunit methyltransferase H (307 aa).

S-adenosyl-L-methionine contacts are provided by residues 32–34, D51, I82, D99, and Q106; that span reads AGH.

Belongs to the methyltransferase superfamily. RsmH family.

It is found in the cytoplasm. The catalysed reaction is cytidine(1402) in 16S rRNA + S-adenosyl-L-methionine = N(4)-methylcytidine(1402) in 16S rRNA + S-adenosyl-L-homocysteine + H(+). Its function is as follows. Specifically methylates the N4 position of cytidine in position 1402 (C1402) of 16S rRNA. This Campylobacter concisus (strain 13826) protein is Ribosomal RNA small subunit methyltransferase H.